Reading from the N-terminus, the 367-residue chain is Probable 7-methylxanthine methyltransferase 2 (367 aa).

Tyrosine 20 is a binding site for S-adenosyl-L-homocysteine. Position 27 (threonine 27) interacts with theobromine. S-adenosyl-L-homocysteine is bound by residues cysteine 64, glutamine 69, aspartate 101, leucine 102, serine 134, and phenylalanine 135. Theobromine is bound by residues tyrosine 152, histidine 155, and tryptophan 156. The Mg(2+) site is built by asparagine 172, aspartate 258, phenylalanine 260, and asparagine 261. Position 313 (phenylalanine 313) interacts with theobromine.

The protein belongs to the methyltransferase superfamily. Type-7 methyltransferase family. Mg(2+) is required as a cofactor.

It catalyses the reaction 7-methylxanthine + S-adenosyl-L-methionine = theobromine + S-adenosyl-L-homocysteine + H(+). It functions in the pathway alkaloid biosynthesis. In terms of biological role, involved in the biosynthesis of theobromine. In Theobroma cacao (Cacao), this protein is Probable 7-methylxanthine methyltransferase 2.